The primary structure comprises 492 residues: Phosphatidylinositol-glycan biosynthesis class W protein (492 aa).

The next 5 membrane-spanning stretches (helical) occupy residues 26–46, 59–79, 82–102, 127–147, and 156–176; these read FILT…ATFF, FILE…FTEL, FLIV…QKNV, YRAF…FQVF, and TYGI…GALV. A disordered region spans residues 185–216; sequence IEKQQKKKREEEEDDNDKINKTSSSSSSSSSA. Asparagine 204 is a glycosylation site (N-linked (GlcNAc...) asparagine). The segment covering 205-216 has biased composition (low complexity); the sequence is KTSSSSSSSSSA. The chain crosses the membrane as a helical span at residues 264–284; it reads YGLHWNFFFTLGFVSISLAFL. Residue asparagine 289 is glycosylated (N-linked (GlcNAc...) asparagine). Helical transmembrane passes span 290–310, 331–351, 364–384, and 399–419; these read ISAI…NSFG, ICSF…GTEL, FATK…LCEI, and VLAI…ITLI. N-linked (GlcNAc...) asparagine glycosylation is present at asparagine 424. 2 helical membrane passes run 437–457 and 464–484; these read LFIF…MKTI and SMII…ILDY.

The protein belongs to the PIGW family.

The protein localises to the endoplasmic reticulum membrane. The protein operates within glycolipid biosynthesis; glycosylphosphatidylinositol-anchor biosynthesis. Its function is as follows. Probable acetyltransferase, which acetylates the inositol ring of phosphatidylinositol during biosynthesis of GPI-anchor. This is Phosphatidylinositol-glycan biosynthesis class W protein from Dictyostelium discoideum (Social amoeba).